The following is a 457-amino-acid chain: Senescence-associated protein OSA15, chloroplastic (457 aa).

Residues 1 to 57 (MATRIPGTVAASGVYYNDQYRMPCKLKGIHCMALNCIPQKAKVRKCMNGYQSTFRFC) constitute a chloroplast transit peptide.

The protein belongs to the ATA15/OSA15 family. Expressed in leaves (at protein level).

The protein localises to the plastid. Its subcellular location is the chloroplast. May be involved in the regulation of leaf senescence. This Oryza sativa subsp. japonica (Rice) protein is Senescence-associated protein OSA15, chloroplastic.